Reading from the N-terminus, the 216-residue chain is ATP-dependent Clp protease proteolytic subunit 1 (216 aa).

The active-site Nucleophile is Ser119. His144 is a catalytic residue.

It belongs to the peptidase S14 family. Fourteen ClpP subunits assemble into 2 heptameric rings which stack back to back to give a disk-like structure with a central cavity, resembling the structure of eukaryotic proteasomes.

Its subcellular location is the cytoplasm. It catalyses the reaction Hydrolysis of proteins to small peptides in the presence of ATP and magnesium. alpha-casein is the usual test substrate. In the absence of ATP, only oligopeptides shorter than five residues are hydrolyzed (such as succinyl-Leu-Tyr-|-NHMec, and Leu-Tyr-Leu-|-Tyr-Trp, in which cleavage of the -Tyr-|-Leu- and -Tyr-|-Trp bonds also occurs).. Its function is as follows. Cleaves peptides in various proteins in a process that requires ATP hydrolysis. Has a chymotrypsin-like activity. Plays a major role in the degradation of misfolded proteins. The chain is ATP-dependent Clp protease proteolytic subunit 1 from Cutibacterium acnes (strain DSM 16379 / KPA171202) (Propionibacterium acnes).